Reading from the N-terminus, the 516-residue chain is MAKPSAPVLFFNSLSKKIENFTPIDPERVRLYSCGPTVYNFAHLGNLRAYVFTDSLRRMLNWKGYPVNHVINITDVGHLTSDSDTGDDKMEAAAHKAQKTIWDVARFYTEAFWSDLKNLNIFNPTIWSIATDHIEDMIAFARKIEEAGFTYQLDSGLYFDTSRLKEYGLLAGHREAEGVGRIETVAGKKHPADFALWRRSSPDEKRQMEWISPWGPGAPGWHLECSVMSMKYLGEQFDIHTGGIDHREIHHCNEIAQNQAFTGDQQKTGANFWLHNNFLVDRSGKMSKSKGSFLTLSTLIEAGIHPLAYRVLCLSAHYRSELEFSPDNILAALTRLKRLVIAVGQLKKKVQKKVVADGEPDWLRAFDERSFSKGAPLDYQRGLIEAPLKKEALAILERFDQAVSNDLMLPQALPLLEETLGNKKLQPEEQLRLIASMDMILGLNLLHLDRASLNIRPKNASLQENNVLALLEERQLKRKEKDFAASDAIRNRLSEAGIDVLDGDPLGWEWRPEWNA.

Cys34 serves as a coordination point for Zn(2+). A 'HIGH' region motif is present at residues 36–46; the sequence is PTVYNFAHLGN. Positions 225, 250, and 254 each coordinate Zn(2+). A 'KMSKS' region motif is present at residues 285–289; it reads KMSKS. Lys288 is an ATP binding site.

The protein belongs to the class-I aminoacyl-tRNA synthetase family. As to quaternary structure, monomer. Requires Zn(2+) as cofactor.

Its subcellular location is the cytoplasm. The catalysed reaction is tRNA(Cys) + L-cysteine + ATP = L-cysteinyl-tRNA(Cys) + AMP + diphosphate. The protein is Cysteine--tRNA ligase of Zymomonas mobilis subsp. mobilis (strain ATCC 31821 / ZM4 / CP4).